The following is a 312-amino-acid chain: Terpene synthase 8 (312 aa).

A DDxx(x)D/E motif motif is present at residues 96–101; it reads DDYIYE. The NDxxSxxxD/E motif signature appears at 224–232; it reads NDCGSFKME.

This sequence belongs to the terpene synthase family.

It carries out the reaction (2E,6E)-farnesyl diphosphate + H2O = discoidol + diphosphate. It functions in the pathway sesquiterpene biosynthesis. Terpene synthase; part of the gene cluster that mediates the biosynthesis of the trisnorsesquiterpene discodiene which has a function during later stages of multicellular development, during the transition from fingers to Mexican hats. The terpene synthase tps8 converts its substrate farnesyl diphosphate (FDP) into the bicyclic sesquiterpene alcohol discoidol. The cytochrome P450 monooxygenase cyp521A1 then catalyzes the oxidative degradation of discoidol to form the trisnorsesquiterpene discodiene. The protein is Terpene synthase 8 of Dictyostelium discoideum (Social amoeba).